The primary structure comprises 446 residues: Mannan endo-1,6-alpha-mannosidase DCW1 (446 aa).

Residues 1–18 form the signal peptide; it reads MRLVTLLSGLVSLVSVFG. N-linked (GlcNAc...) asparagine glycosylation is found at asparagine 31, asparagine 81, asparagine 106, asparagine 200, asparagine 222, asparagine 237, asparagine 262, asparagine 278, asparagine 285, asparagine 334, asparagine 391, and asparagine 397. The disordered stretch occupies residues 389 to 408; sequence PYNATNGGNSTGDGAAGTKP. Serine 422 carries GPI-anchor amidated serine lipidation. The propeptide at 423-446 is removed in mature form; it reads RAGAGIITAIIGISIIACALWLVY.

It belongs to the glycosyl hydrolase 76 family.

The protein localises to the secreted. It is found in the cell wall. It localises to the cell membrane. It carries out the reaction Random hydrolysis of (1-&gt;6)-alpha-D-mannosidic linkages in unbranched (1-&gt;6)-mannans.. Functionally, required for normal synthesis of the cell wall. In Candida glabrata (strain ATCC 2001 / BCRC 20586 / JCM 3761 / NBRC 0622 / NRRL Y-65 / CBS 138) (Yeast), this protein is Mannan endo-1,6-alpha-mannosidase DCW1 (DCW1).